The sequence spans 134 residues: D-xylulose reductase (134 aa).

Residues 31–115 (PATTTXYKXQ…XXQXDKIGRY (85 aa)) form a disordered region. Basic and acidic residues predominate over residues 50-59 (QTHEGTHQDV).

It belongs to the zinc-containing alcohol dehydrogenase family.

It catalyses the reaction xylitol + NAD(+) = D-xylulose + NADH + H(+). With respect to regulation, activated by calcium and inhibited by zinc. This chain is D-xylulose reductase, found in Sus scrofa (Pig).